The primary structure comprises 95 residues: Cell division protein FtsB (95 aa).

The Cytoplasmic portion of the chain corresponds to 1–3 (MRL). Residues 4–21 (FILILSAILLLFQYDLWF) form a helical membrane-spanning segment. The Periplasmic segment spans residues 22–95 (GKNGYLDYKE…RIAKENKDNR (74 aa)). Positions 28-62 (DYKETAEEIAMHKAENTKLSQRNQVVAAEIRDLKD) form a coiled coil.

Belongs to the FtsB family. Part of a complex composed of FtsB, FtsL and FtsQ.

It localises to the cell inner membrane. Its function is as follows. Essential cell division protein. May link together the upstream cell division proteins, which are predominantly cytoplasmic, with the downstream cell division proteins, which are predominantly periplasmic. The polypeptide is Cell division protein FtsB (Mannheimia succiniciproducens (strain KCTC 0769BP / MBEL55E)).